A 656-amino-acid chain; its full sequence is Choline transporter-like protein 1 (656 aa).

The N-myristoyl glycine moiety is linked to residue Gly2. The Cytoplasmic portion of the chain corresponds to 2-29 (GCCSSASAAQSSKREWKPLEDRSCTDIP). The chain crosses the membrane as a helical span at residues 30 to 50 (WLLLFVLFCIGMGFICGFSVA). Topologically, residues 51–211 (TGAAARLVSG…RLISGVMTSK (161 aa)) are extracellular. N-linked (GlcNAc...) asparagine glycans are attached at residues Asn134 and Asn179. A helical transmembrane segment spans residues 212-232 (EIILGLCLLSLVLSMILMVII). The Cytoplasmic segment spans residues 233–237 (RYISR). A helical membrane pass occupies residues 238-258 (VLVWILTILVILGSLGGTGVL). Residues 259-287 (WWLYAKQRRSPKETVIPEQLQIAEDNLRA) lie on the Extracellular side of the membrane. The helical transmembrane segment at 288 to 308 (LLIYAISATVFTVILFLIMLV) threads the bilayer. The Cytoplasmic segment spans residues 309–314 (MRKRVA). Residues 315–335 (LTIALFHVAGKVFIHLPLLVF) traverse the membrane as a helical segment. Residues 336 to 337 (QP) lie on the Extracellular side of the membrane. Residues 338–358 (FWTFFALVLFWAYWIMTLLFL) form a helical membrane-spanning segment. The Cytoplasmic portion of the chain corresponds to 359–379 (GTTGSAVQNEQGFVEYKISGP). A helical membrane pass occupies residues 380–400 (LQYMWWYHVVGLIWISEFILA). The Extracellular segment spans residues 401 to 441 (CQQMTVAGAVVTYYFTRDKRNLPFTPILASVNRLIRYHLGT). Residues 442–462 (VAKGSFIITLVKIPRMILMYI) form a helical membrane-spanning segment. Topologically, residues 463 to 536 (HSQLKGKENA…RVAAINTVGD (74 aa)) are cytoplasmic. Residues 537–557 (FMLFLGKVLIVCSTGLAGIML) traverse the membrane as a helical segment. Residues 558-565 (LNYQQDYT) are Extracellular-facing. Residues 566-586 (VWVLPLIIVCLFAFLVAHCFL) traverse the membrane as a helical segment. The Cytoplasmic portion of the chain corresponds to 587–656 (SIYEMVVDVL…KPMASGASSA (70 aa)). The disordered stretch occupies residues 635–656 (AGKGGAADARKLKPMASGASSA). Phosphoserine is present on Ser651.

The protein belongs to the CTL (choline transporter-like) family. As to expression, expressed in neurons, oligodendrocytes and astrocytes. Also expressed in the mucosal cell layer of the colon. In the developing brain, isoform 1 is expressed in both neurons and oligodendroglial cells, whereas isoform 2 is restricted to oligodendroglial cells.

The protein localises to the cell membrane. Its subcellular location is the mitochondrion outer membrane. The catalysed reaction is choline(out) + n H(+)(in) = choline(in) + n H(+)(out). It catalyses the reaction ethanolamine(out) + n H(+)(in) = ethanolamine(in) + n H(+)(out). Functionally, choline transporter, acts as a choline/H+ antiporter. Also acts as a high-affinity ethanolamine/H+ antiporter, regulating the supply of extracellular ethanolamine (Etn) for the CDP-Etn pathway, redistribute intracellular Etn and balance the CDP-Cho and CDP-Etn arms of the Kennedy pathway. Involved in membrane synthesis and myelin production. This chain is Choline transporter-like protein 1 (Slc44a1), found in Rattus norvegicus (Rat).